Here is a 160-residue protein sequence, read N- to C-terminus: Serine-protein kinase RsbW (160 aa).

This sequence belongs to the anti-sigma-factor family.

The catalysed reaction is L-seryl-[protein] + ATP = O-phospho-L-seryl-[protein] + ADP + H(+). It catalyses the reaction L-threonyl-[protein] + ATP = O-phospho-L-threonyl-[protein] + ADP + H(+). Negative regulator of sigma-B activity. Phosphorylates and inactivates its specific antagonist protein, RsbV. Upon phosphorylation of RsbV, RsbW is released and binds to sigma-B, thereby blocking its ability to form an RNA polymerase holoenzyme (E-sigma-B). The protein is Serine-protein kinase RsbW of Bacillus cereus (strain AH187).